A 429-amino-acid polypeptide reads, in one-letter code: tRNA-2-methylthio-N(6)-dimethylallyladenosine synthase (429 aa).

The 110-residue stretch at 1 to 110 (MKFFIKTYGC…IPEAVELSIK (110 aa)) folds into the MTTase N-terminal domain. Residues Cys-10, Cys-46, Cys-75, Cys-146, Cys-150, and Cys-153 each coordinate [4Fe-4S] cluster. One can recognise a Radical SAM core domain in the interval 132 to 364 (RNSKHHAWIT…NLQKEINKML (233 aa)). A TRAM domain is found at 366–427 (ESYLDKTVEV…AGPLYGDIIK (62 aa)).

The protein belongs to the methylthiotransferase family. MiaB subfamily. Monomer. [4Fe-4S] cluster serves as cofactor.

Its subcellular location is the cytoplasm. The enzyme catalyses N(6)-dimethylallyladenosine(37) in tRNA + (sulfur carrier)-SH + AH2 + 2 S-adenosyl-L-methionine = 2-methylsulfanyl-N(6)-dimethylallyladenosine(37) in tRNA + (sulfur carrier)-H + 5'-deoxyadenosine + L-methionine + A + S-adenosyl-L-homocysteine + 2 H(+). Catalyzes the methylthiolation of N6-(dimethylallyl)adenosine (i(6)A), leading to the formation of 2-methylthio-N6-(dimethylallyl)adenosine (ms(2)i(6)A) at position 37 in tRNAs that read codons beginning with uridine. In Thermosipho africanus (strain TCF52B), this protein is tRNA-2-methylthio-N(6)-dimethylallyladenosine synthase.